The following is a 158-amino-acid chain: Large ribosomal subunit protein uL11 (158 aa).

Belongs to the universal ribosomal protein uL11 family. In terms of assembly, part of the ribosomal stalk of the 50S ribosomal subunit. Interacts with L10 and the large rRNA to form the base of the stalk. L10 forms an elongated spine to which L12 dimers bind in a sequential fashion forming a multimeric L10(L12)X complex.

Forms part of the ribosomal stalk which helps the ribosome interact with GTP-bound translation factors. This is Large ribosomal subunit protein uL11 from Methanoregula boonei (strain DSM 21154 / JCM 14090 / 6A8).